A 387-amino-acid chain; its full sequence is GTPase Obg (387 aa).

The 159-residue stretch at 1-159 (MKFVDEAVIR…RSLRLELMLL (159 aa)) folds into the Obg domain. The OBG-type G domain maps to 160–333 (ADVGLLGMPN…LALKLMDFID (174 aa)). Residues 166 to 173 (GMPNAGKS), 191 to 195 (FTTLV), 213 to 216 (DIPG), 283 to 286 (NKTD), and 314 to 316 (SAY) contribute to the GTP site. Residues Ser-173 and Thr-193 each coordinate Mg(2+).

It belongs to the TRAFAC class OBG-HflX-like GTPase superfamily. OBG GTPase family. Monomer. The cofactor is Mg(2+).

It is found in the cytoplasm. In terms of biological role, an essential GTPase which binds GTP, GDP and possibly (p)ppGpp with moderate affinity, with high nucleotide exchange rates and a fairly low GTP hydrolysis rate. Plays a role in control of the cell cycle, stress response, ribosome biogenesis and in those bacteria that undergo differentiation, in morphogenesis control. This chain is GTPase Obg, found in Shewanella loihica (strain ATCC BAA-1088 / PV-4).